Reading from the N-terminus, the 368-residue chain is Glutamate 5-kinase (368 aa).

Lys11 contributes to the ATP binding site. Substrate contacts are provided by Ser51, Asp138, and Asn150. ATP is bound by residues 170 to 171 (TD) and 212 to 218 (TGGMATK). Residues 276-354 (AGEIIVDHGA…QQISQILGYE (79 aa)) form the PUA domain.

Belongs to the glutamate 5-kinase family.

The protein resides in the cytoplasm. It catalyses the reaction L-glutamate + ATP = L-glutamyl 5-phosphate + ADP. It functions in the pathway amino-acid biosynthesis; L-proline biosynthesis; L-glutamate 5-semialdehyde from L-glutamate: step 1/2. Functionally, catalyzes the transfer of a phosphate group to glutamate to form L-glutamate 5-phosphate. The protein is Glutamate 5-kinase of Photorhabdus laumondii subsp. laumondii (strain DSM 15139 / CIP 105565 / TT01) (Photorhabdus luminescens subsp. laumondii).